The following is a 476-amino-acid chain: Proline--tRNA ligase (476 aa).

The protein belongs to the class-II aminoacyl-tRNA synthetase family. ProS type 3 subfamily. As to quaternary structure, homodimer.

The protein resides in the cytoplasm. It catalyses the reaction tRNA(Pro) + L-proline + ATP = L-prolyl-tRNA(Pro) + AMP + diphosphate. In terms of biological role, catalyzes the attachment of proline to tRNA(Pro) in a two-step reaction: proline is first activated by ATP to form Pro-AMP and then transferred to the acceptor end of tRNA(Pro). In Cenarchaeum symbiosum (strain A), this protein is Proline--tRNA ligase.